Here is a 462-residue protein sequence, read N- to C-terminus: Acetyl-CoA decarbonylase/synthase complex subunit gamma (462 aa).

Residues M1–P60 enclose the 4Fe-4S domain. [4Fe-4S] cluster-binding residues include C18, C21, C26, and C43.

Heterodimer of delta and gamma chains. The ACDS complex is made up of alpha, epsilon, beta, gamma and delta chains with a probable stoichiometry of (alpha(2)epsilon(2))(4)-beta(8)-(gamma(1)delta(1))(8). It depends on corrinoid as a cofactor. [4Fe-4S] cluster is required as a cofactor.

It catalyses the reaction 5,6,7,8-tetrahydrosarcinapterin + methyl-Co(III)-[corrinoid Fe-S protein] = 5-methyltetrahydrosarcinapterin + Co(I)-[corrinoid Fe-S protein] + H(+). Part of a complex that catalyzes the reversible cleavage of acetyl-CoA, allowing autotrophic growth from CO(2). In Methanopyrus kandleri (strain AV19 / DSM 6324 / JCM 9639 / NBRC 100938), this protein is Acetyl-CoA decarbonylase/synthase complex subunit gamma.